The following is a 159-amino-acid chain: Putative 4-hydroxy-4-methyl-2-oxoglutarate aldolase (159 aa).

Substrate is bound by residues 78–81 and R100; that span reads GDVI. A divalent metal cation is bound at residue D101.

The protein belongs to the class II aldolase/RraA-like family. Homotrimer. The cofactor is a divalent metal cation.

The catalysed reaction is 4-hydroxy-4-methyl-2-oxoglutarate = 2 pyruvate. It catalyses the reaction oxaloacetate + H(+) = pyruvate + CO2. Functionally, catalyzes the aldol cleavage of 4-hydroxy-4-methyl-2-oxoglutarate (HMG) into 2 molecules of pyruvate. Also contains a secondary oxaloacetate (OAA) decarboxylase activity due to the common pyruvate enolate transition state formed following C-C bond cleavage in the retro-aldol and decarboxylation reactions. The sequence is that of Putative 4-hydroxy-4-methyl-2-oxoglutarate aldolase from Mycobacterium sp. (strain KMS).